The following is a 407-amino-acid chain: PWWP domain-containing protein 3 (407 aa).

Positions 1 to 46 (MMVARTRSQKRKLEEINNQKKIKTKKKATGQQTSNTKNLRDVKKKG) are disordered. Residues 63–129 (NGEYVLAKMS…SSNVLPLTVD (67 aa)) form the PWWP domain. Phosphoserine occurs at positions 160 and 162. The tract at residues 163-248 (DVEEDEFEPE…PIPSPKKTAK (86 aa)) is disordered. Over residues 172–208 (ENTRKKLQKPIEKPKKEKIEATPKIDGGKRLKNEKSS) the composition is skewed to basic and acidic residues. Phosphoserine is present on residues S236, S238, and S242.

Component of the mst2 complex composed of at least eaf6, mst2, nto1, pdp3, ptf1, ptf2 and tfg3.

It is found in the nucleus. In terms of biological role, component of the mst2 complex which is a highly specific H3 lysine 14 (H3K14) acetyltransferase that functions together with gcn5 to regulate global levels of H3K14 acetylation (H3K14ac), critical for DNA damage checkpoint activation. This is PWWP domain-containing protein 3 (pdp3) from Schizosaccharomyces pombe (strain 972 / ATCC 24843) (Fission yeast).